Here is a 1030-residue protein sequence, read N- to C-terminus: FACT complex subunit spt-16 (1030 aa).

Residues Arg424–Asn445 are a coiled coil. 2 stretches are compositionally biased toward basic and acidic residues: residues Glu435–Lys449 and Thr464–Arg477. Disordered regions lie at residues Glu435–Arg477 and Ala491–Thr514. Positions Arg623–Ala645 form a coiled coil. The segment at Val927–Lys1030 is disordered. Composition is skewed to acidic residues over residues Ser929–Ala951 and Glu958–Glu983. Residues Lys987–Glu1007 are a coiled coil. Positions Asn998–Arg1014 are enriched in basic and acidic residues. Positions Lys1015 to Lys1030 are enriched in basic residues.

The protein belongs to the peptidase M24 family. SPT16 subfamily. In terms of assembly, component of the FACT complex, a stable heterodimer of spt-16 and hmg-3 or hmg-4. In terms of tissue distribution, expressed in the germline and somatic cells.

It is found in the nucleus. It localises to the chromosome. Component of the FACT complex, a general chromatin factor that acts to reorganize nucleosomes. The FACT complex is involved in multiple processes that require DNA as a template such as mRNA elongation, DNA replication and DNA repair. During transcription elongation the FACT complex acts as a histone chaperone that both destabilizes and restores nucleosomal structure. It facilitates the passage of RNA polymerase II and transcription by promoting the dissociation of one histone H2A-H2B dimer from the nucleosome, then subsequently promotes the reestablishment of the nucleosome following the passage of RNA polymerase II. In embryos, promotes cell cycle progression and chromosomal segregation. Plays a role in the development of the anterior pharynx during embryonic development. The sequence is that of FACT complex subunit spt-16 from Caenorhabditis elegans.